Reading from the N-terminus, the 400-residue chain is Tryptophan synthase beta chain (400 aa).

Lysine 92 is subject to N6-(pyridoxal phosphate)lysine.

Belongs to the TrpB family. Tetramer of two alpha and two beta chains. It depends on pyridoxal 5'-phosphate as a cofactor.

It carries out the reaction (1S,2R)-1-C-(indol-3-yl)glycerol 3-phosphate + L-serine = D-glyceraldehyde 3-phosphate + L-tryptophan + H2O. Its pathway is amino-acid biosynthesis; L-tryptophan biosynthesis; L-tryptophan from chorismate: step 5/5. In terms of biological role, the beta subunit is responsible for the synthesis of L-tryptophan from indole and L-serine. This chain is Tryptophan synthase beta chain, found in Neisseria gonorrhoeae.